Here is a 478-residue protein sequence, read N- to C-terminus: Deoxyribodipyrimidine photo-lyase (478 aa).

The Photolyase/cryptochrome alpha/beta domain maps to 2 to 136 (NVNLMWFRND…IINCFHDSVL (135 aa)). Glu110 is a binding site for (6R)-5,10-methylene-5,6,7,8-tetrahydrofolate. FAD is bound by residues Tyr227 and 239–243 (TSMLS). Interaction with DNA stretches follow at residues 279–286 (ELLWREFY) and 346–347 (NR). 377-379 (DGD) contributes to the FAD binding site. A DNA-binding site is contributed by Gln409.

Belongs to the DNA photolyase class-1 family. Monomer. It depends on FAD as a cofactor. The cofactor is (6R)-5,10-methylene-5,6,7,8-tetrahydrofolate.

The catalysed reaction is cyclobutadipyrimidine (in DNA) = 2 pyrimidine residues (in DNA).. In terms of biological role, involved in repair of UV radiation-induced DNA damage. Catalyzes the light-dependent monomerization (300-600 nm) of cyclobutyl pyrimidine dimers (in cis-syn configuration), which are formed between adjacent bases on the same DNA strand upon exposure to ultraviolet radiation. The sequence is that of Deoxyribodipyrimidine photo-lyase (phrB) from Buchnera aphidicola subsp. Baizongia pistaciae (strain Bp).